Consider the following 423-residue polypeptide: Ribosome biogenesis protein WDR12 homolog (423 aa).

The interval 10–93 is ubiquitin-like (UBL) domain; sequence VQVHLKTKQE…EDAIEIEYVE (84 aa). WD repeat units follow at residues 105-142, 144-186, 193-232, 253-291, 293-332, 338-378, and 382-420; these read LHDDWVSAVKVSGKWILTGCYDNTLNIWTHKGKHILTI, GHTA…NAVE, GHERGVDSISVSPDATRFATGSWDTMLKVWSAAEDDAGGD, GHRESISAVQWIDTSTLLTTSWDHTMKIWDLSLEGIKTE, STNKSIFDASYSNLNRLIVTASADKNLRLYDPRTNQGSIV, GHNA…APLY, and GHGEKVLDIDWSNPKYICSGGADNTVRVFKSRKAGVETM.

Belongs to the WD repeat WDR12/YTM1 family.

It localises to the nucleus. It is found in the nucleolus. The protein resides in the nucleoplasm. Required for maturation of ribosomal RNAs and formation of the large ribosomal subunit. This Drosophila willistoni (Fruit fly) protein is Ribosome biogenesis protein WDR12 homolog.